The primary structure comprises 458 residues: Monomethylamine methyltransferase MtmB (458 aa).

Residue Pyl202 is a non-standard amino acid, pyrrolysine.

This sequence belongs to the monomethylamine methyltransferase family. As to quaternary structure, can form a complex with MtmC.

The enzyme catalyses Co(I)-[methylamine-specific corrinoid protein] + methylamine + H(+) = methyl-Co(III)-[methylamine-specific corrinoid protein] + NH4(+). Its pathway is one-carbon metabolism; methanogenesis from methylamine. Catalyzes the transfer of the methyl group from monomethylamine to the corrinoid cofactor of MtmC. This Methanosarcina mazei (strain ATCC BAA-159 / DSM 3647 / Goe1 / Go1 / JCM 11833 / OCM 88) (Methanosarcina frisia) protein is Monomethylamine methyltransferase MtmB (mtmB1).